We begin with the raw amino-acid sequence, 180 residues long: Transcriptional repressor NrdR (180 aa).

A zinc finger spans residues 3-34; the sequence is CPRCSKQEIRVLESRSAEGGQSVRRRRECMSC. Positions 49 to 139 constitute an ATP-cone domain; the sequence is IMVIKRDGSR…VYRQFQGIKD (91 aa). Residues 155-180 are disordered; that stretch reads LERLLQDSSASDSESSGSPDLVGEYS. Low complexity predominate over residues 160 to 174; that stretch reads QDSSASDSESSGSPD.

The protein belongs to the NrdR family. Zn(2+) is required as a cofactor.

Its function is as follows. Negatively regulates transcription of bacterial ribonucleotide reductase nrd genes and operons by binding to NrdR-boxes. The chain is Transcriptional repressor NrdR from Synechococcus sp. (strain JA-2-3B'a(2-13)) (Cyanobacteria bacterium Yellowstone B-Prime).